The chain runs to 489 residues: MESTFSSPAEAALQREAGVPGLFTPPEDLDRVYELERVTKFVCDLGCQRVALQFPDQLLGDAGAVAVRLEEVTGSKMFILGDTAYGSCCVDVLGAEQAGAEALVHFGPACLSPPASLLPITFVLGQRSVALELCAKAFEARNPDPTAPVVLLSEPACAHALEALATLLRPKYQDLLISSPALPLPVGSPSSQPEPLERFGRRFPLSPGRCLEEYGAFYVGGSQASSDPVLDPDLSRLLLGWTPGRPFISCCPDTGQTQDQGVQAGRLRARRLYLIERARDAHVVGLLAGTLGVAQHREALAHLRKLTEAAGKRSYVLALGRPTPAKLANFPEMDIFVLLACPLGALAPQPSGGFFRPILTPCELEAACNPAWPPPGLAPHLTHYAELLPGSPFYVPLPPPESELWDTPDVSLISGDLRPPPSWKSSSDTGCSALTPRPQLELAESSPAASFLSSRSWQGLEPRLGQTPVKEAVQGRRGIAIAYEDEGSG.

Met1 is modified (N-acetylmethionine). Residue Ser7 is modified to Phosphoserine. Residues Cys89, Cys110, and Cys341 each contribute to the [4Fe-4S] cluster site. The segment at 398 to 489 (PPPESELWDT…AIAYEDEGSG (92 aa)) is required for function. Thr435 is subject to Phosphothreonine. A phosphoserine mark is found at Ser446 and Ser456. Thr467 is subject to Phosphothreonine. Ser488 carries the phosphoserine modification.

This sequence belongs to the DPH1/DPH2 family. DPH2 subfamily. In terms of assembly, component of the 2-(3-amino-3-carboxypropyl)histidine synthase complex composed of DPH1, DPH2, DPH3 and a NADH-dependent reductase. Interacts with DPH1. It depends on [4Fe-4S] cluster as a cofactor.

Its pathway is protein modification; peptidyl-diphthamide biosynthesis. In terms of biological role, required for the first step of diphthamide biosynthesis, a post-translational modification of histidine which occurs in elongation factor 2. DPH1 and DPH2 transfer a 3-amino-3-carboxypropyl (ACP) group from S-adenosyl-L-methionine (SAM) to a histidine residue, the reaction is assisted by a reduction system comprising DPH3 and a NADH-dependent reductase. Facilitates the reduction of the catalytic iron-sulfur cluster found in the DPH1 subunit. This chain is 2-(3-amino-3-carboxypropyl)histidine synthase subunit 2 (DPH2), found in Cricetulus griseus (Chinese hamster).